The following is a 412-amino-acid chain: MSELLLPPEHRYAKIIKERHNEDGSELSVLNLGPTHPATHGIFQNILLMDGERILEAEPTIGYIHRAFEKIAENRPFYQITPLTDRMNYCSSPINNMGWWMTLEKLLGIEVPKRAQYLRVIVMELARITDHIICNSILGVDTGAYTGFLYVFQFREKIYEIYEEICGARLTTNMGRIGGFERDWSPEAFRKLDKFLEEFPPAWKEFENLFERNRIFLDRTVNVGGITAEKAMAYGFTGPNLRAAGVDYDVRVAHPYSSYEDFDFIVPVGKSGDTYDRFCVRNAEVWESLSIIRQALEKMPAGNEYHAEVPDYYLPPKEDVYNSMESLIYHFKIVMGEVPVPVSEIYHAVEGGNGELGFYLATDGSRTPYRLHFRRPCFIYYQAFPEMIKGALLSDAIIILSSLNVIAGELDA.

This sequence belongs to the complex I 49 kDa subunit family. NDH-1 is composed of 14 different subunits. Subunits NuoB, C, D, E, F, and G constitute the peripheral sector of the complex.

Its subcellular location is the cell inner membrane. It carries out the reaction a quinone + NADH + 5 H(+)(in) = a quinol + NAD(+) + 4 H(+)(out). Functionally, NDH-1 shuttles electrons from NADH, via FMN and iron-sulfur (Fe-S) centers, to quinones in the respiratory chain. The immediate electron acceptor for the enzyme in this species is believed to be a menaquinone. Couples the redox reaction to proton translocation (for every two electrons transferred, four hydrogen ions are translocated across the cytoplasmic membrane), and thus conserves the redox energy in a proton gradient. This chain is NADH-quinone oxidoreductase subunit D, found in Flavobacterium johnsoniae (strain ATCC 17061 / DSM 2064 / JCM 8514 / BCRC 14874 / CCUG 350202 / NBRC 14942 / NCIMB 11054 / UW101) (Cytophaga johnsonae).